A 730-amino-acid chain; its full sequence is Catalase-peroxidase 1 (730 aa).

Positions 1-24 (MQEKGKCPVTGMTKHKTSGGTTNQ) are disordered. The segment at residues 95 to 218 (WHSAGTYRMG…LAAVQMGLIY (124 aa)) is a cross-link (tryptophyl-tyrosyl-methioninium (Trp-Tyr) (with M-244)). Catalysis depends on His96, which acts as the Proton acceptor. The tryptophyl-tyrosyl-methioninium (Tyr-Met) (with W-95) cross-link spans 218 to 244 (YVNPEGPNGQPSALASGKDIRDTFARM). His259 is a binding site for heme b.

It belongs to the peroxidase family. Peroxidase/catalase subfamily. In terms of assembly, homodimer or homotetramer. It depends on heme b as a cofactor. Formation of the three residue Trp-Tyr-Met cross-link is important for the catalase, but not the peroxidase activity of the enzyme.

The enzyme catalyses H2O2 + AH2 = A + 2 H2O. The catalysed reaction is 2 H2O2 = O2 + 2 H2O. Its function is as follows. Bifunctional enzyme with both catalase and broad-spectrum peroxidase activity. The polypeptide is Catalase-peroxidase 1 (Alkaliphilus metalliredigens (strain QYMF)).